The primary structure comprises 206 residues: Thymidylate kinase (206 aa).

11–18 serves as a coordination point for ATP; sequence GIDGAGKT.

This sequence belongs to the thymidylate kinase family.

It catalyses the reaction dTMP + ATP = dTDP + ADP. In terms of biological role, phosphorylation of dTMP to form dTDP in both de novo and salvage pathways of dTTP synthesis. In Burkholderia thailandensis (strain ATCC 700388 / DSM 13276 / CCUG 48851 / CIP 106301 / E264), this protein is Thymidylate kinase.